The sequence spans 209 residues: Ribosomal RNA large subunit methyltransferase E (209 aa).

S-adenosyl-L-methionine contacts are provided by glycine 63, tryptophan 65, aspartate 83, aspartate 99, and aspartate 124. Catalysis depends on lysine 164, which acts as the Proton acceptor.

The protein belongs to the class I-like SAM-binding methyltransferase superfamily. RNA methyltransferase RlmE family.

It localises to the cytoplasm. The catalysed reaction is uridine(2552) in 23S rRNA + S-adenosyl-L-methionine = 2'-O-methyluridine(2552) in 23S rRNA + S-adenosyl-L-homocysteine + H(+). Functionally, specifically methylates the uridine in position 2552 of 23S rRNA at the 2'-O position of the ribose in the fully assembled 50S ribosomal subunit. The protein is Ribosomal RNA large subunit methyltransferase E of Shewanella oneidensis (strain ATCC 700550 / JCM 31522 / CIP 106686 / LMG 19005 / NCIMB 14063 / MR-1).